The chain runs to 104 residues: Large ribosomal subunit protein uL24 (104 aa).

The protein belongs to the universal ribosomal protein uL24 family. Part of the 50S ribosomal subunit.

One of two assembly initiator proteins, it binds directly to the 5'-end of the 23S rRNA, where it nucleates assembly of the 50S subunit. Its function is as follows. One of the proteins that surrounds the polypeptide exit tunnel on the outside of the subunit. The protein is Large ribosomal subunit protein uL24 of Buchnera aphidicola subsp. Acyrthosiphon pisum (strain 5A).